The primary structure comprises 335 residues: Hsp90 co-chaperone Cdc37-like 1 (335 aa).

Over residues 1–11 the composition is skewed to pro residues; it reads MEQPWPPPGPW. The tract at residues 1 to 42 is disordered; sequence MEQPWPPPGPWSFPRTGGETEEESDLDVSPSSSHYSPVPDGG. The interval 2 to 170 is self-association; sequence EQPWPPPGPW…YEQKIRHFGM (169 aa). Over residues 27 to 40 the composition is skewed to low complexity; sequence DVSPSSSHYSPVPD. 2 positions are modified to phosphoserine: serine 32 and serine 88. A coiled-coil region spans residues 84–120; the sequence is HNSESLDQEHAKAQTAVSELRQREEEWRQKEEALVQR. Residues 147–276 form a self-association and interaction with Hsp90 region; that stretch reads KTEDEDKSQS…ARVRLYAQSQ (130 aa). Residues 266–335 form an interaction with Hsp70 region; sequence KARVRLYAQS…EDDDRMMDTV (70 aa). The tract at residues 277-335 is required for interaction with STIP1; it reads SFAPVTVENHAPHSGVGCIGSAEPLPQNPDSLQCCPPAPLCSVDSVVHKEDDDRMMDTV.

The protein belongs to the CDC37 family. In terms of assembly, self-associates. Forms complexes with Hsp70 and Hsp90. Interacts with CDC37, FKBP4, PPID and STIP1.

The protein resides in the cytoplasm. In terms of biological role, co-chaperone that binds to numerous proteins and promotes their interaction with Hsp70 and Hsp90. This is Hsp90 co-chaperone Cdc37-like 1 (Cdc37l1) from Rattus norvegicus (Rat).